A 414-amino-acid chain; its full sequence is Cytosolic-abundant heat soluble protein 89226 (414 aa).

Composition is skewed to basic and acidic residues over residues 27–45 (IGED…DKRP) and 69–84 (AGQR…ERLR). A disordered region spans residues 27–155 (IGEDRGKEDP…SNPGMNNGMT (129 aa)). Composition is skewed to low complexity over residues 86 to 101 (SRSS…VEPS) and 120 to 134 (SSNR…SSSD). Residues 142-155 (ASRNSNPGMNNGMT) are compositionally biased toward polar residues. 2 CAHS motif regions span residues 305–323 (YRNA…LERQ) and 342–360 (QQQE…LEQE). The stretch at 341–376 (RQQQEIRLEAEYAMRALEQERVNARAALDQAMASTN) forms a coiled coil. The segment covering 388–405 (THSQGRVTTTSESRTSQA) has biased composition (polar residues). The disordered stretch occupies residues 388-414 (THSQGRVTTTSESRTSQARGPATAAVI).

This sequence belongs to the Cytosolic-abundant heat soluble protein (CAHS) family.

Its subcellular location is the cytoplasm. Its function is as follows. CAHS proteins are cytosolic heat soluble proteins that seem to contribute to the anhydrobiosis in tardigrades, but their specific mechanisms are yet to be identified. It is possible that protection during anhydrobiosis might occur via the stabilization of vitrifying small molecules such as sugars, but not via the direct glass transition of CAHS proteins themselves. The protein is Cytosolic-abundant heat soluble protein 89226 of Hypsibius exemplaris (Freshwater tardigrade).